The primary structure comprises 227 residues: Probable septum site-determining protein MinC (227 aa).

Belongs to the MinC family. Interacts with MinD and FtsZ.

Its function is as follows. Cell division inhibitor that blocks the formation of polar Z ring septums. Rapidly oscillates between the poles of the cell to destabilize FtsZ filaments that have formed before they mature into polar Z rings. Prevents FtsZ polymerization. The protein is Probable septum site-determining protein MinC of Clostridioides difficile (strain 630) (Peptoclostridium difficile).